Here is a 205-residue protein sequence, read N- to C-terminus: Putative glutamine amidotransferase-like protein L716 (205 aa).

Residues 1–176 (MLLIIQNGYI…SNHIESYDYA (176 aa)) enclose the Glutamine amidotransferase type-1 domain. Residues C82, H155, and D157 each act as for GATase activity in the active site.

This is Putative glutamine amidotransferase-like protein L716 from Acanthamoeba polyphaga mimivirus (APMV).